The following is a 439-amino-acid chain: uncharacterized protein (439 aa).

Disordered regions lie at residues 1–36, 126–157, and 411–439; these read MRPGNAATAHDTGTQPRPGPTENWRSPAAVTRSKQA, SRTGAAVSDEYRPTGAALEQPGQEPGGTGVPI, and FRSDVPQPPPSPACRTTRAGSGAVAAVPR.

This is an uncharacterized protein from Streptomyces fradiae (Streptomyces roseoflavus).